The sequence spans 187 residues: Interferon alpha-3 (187 aa).

The signal sequence occupies residues 1–23; that stretch reads MALPCSFSVALVLLSCHSLCCLA. Intrachain disulfides connect C24/C122 and C52/C160. Residues N94 and N101 are each glycosylated (N-linked (GlcNAc...) asparagine).

Belongs to the alpha/beta interferon family.

The protein resides in the secreted. Produced by macrophages, IFN-alpha have antiviral activities. Interferon stimulates the production of two enzymes: a protein kinase and an oligoadenylate synthetase. This is Interferon alpha-3 from Canis lupus familiaris (Dog).